A 664-amino-acid polypeptide reads, in one-letter code: Methionine--tRNA ligase (664 aa).

Residues 15-25 (YYPSGKLHIGH) carry the 'HIGH' region motif. The 'KMSKS' region motif lies at 311-315 (KMSKS). ATP is bound at residue lysine 314. Residues 536-556 (MQGSAPAKEETKEEEPQEVDR) form a disordered region. The tRNA-binding domain occupies 570–662 (LRVAEVIEAE…IDQSLPKGTR (93 aa)).

Belongs to the class-I aminoacyl-tRNA synthetase family. MetG type 2B subfamily. In terms of assembly, homodimer.

It localises to the cytoplasm. The catalysed reaction is tRNA(Met) + L-methionine + ATP = L-methionyl-tRNA(Met) + AMP + diphosphate. Its function is as follows. Is required not only for elongation of protein synthesis but also for the initiation of all mRNA translation through initiator tRNA(fMet) aminoacylation. The polypeptide is Methionine--tRNA ligase (metG) (Bacillus subtilis (strain 168)).